Reading from the N-terminus, the 124-residue chain is Probable glycine cleavage system H protein (124 aa).

Residues 23–104 (VATVGITDYA…PYKNWLVKIR (82 aa)) enclose the Lipoyl-binding domain. Position 64 is an N6-lipoyllysine (lysine 64).

It belongs to the GcvH family. The glycine cleavage system is composed of four proteins: P, T, L and H. The cofactor is (R)-lipoate.

The glycine cleavage system catalyzes the degradation of glycine. The H protein shuttles the methylamine group of glycine from the P protein to the T protein. The sequence is that of Probable glycine cleavage system H protein from Picrophilus torridus (strain ATCC 700027 / DSM 9790 / JCM 10055 / NBRC 100828 / KAW 2/3).